The chain runs to 513 residues: GMP synthase [glutamine-hydrolyzing] (513 aa).

The Glutamine amidotransferase type-1 domain maps to 5–195 (LVLVIDFGGQ…VYNICGCTGD (191 aa)). The active-site Nucleophile is cysteine 82. Active-site residues include histidine 169 and glutamate 171. The region spanning 196 to 388 (WKMDSFVEKT…LGIPEKLVFR (193 aa)) is the GMPS ATP-PPase domain. 223 to 229 (SGGVDSS) is a binding site for ATP.

In terms of assembly, homodimer.

The enzyme catalyses XMP + L-glutamine + ATP + H2O = GMP + L-glutamate + AMP + diphosphate + 2 H(+). Its pathway is purine metabolism; GMP biosynthesis; GMP from XMP (L-Gln route): step 1/1. Functionally, catalyzes the synthesis of GMP from XMP. The protein is GMP synthase [glutamine-hydrolyzing] of Clostridium botulinum (strain Eklund 17B / Type B).